A 515-amino-acid polypeptide reads, in one-letter code: 1-pyrroline-5-carboxylate dehydrogenase (515 aa).

Residues E286 and C320 contribute to the active site.

This sequence belongs to the aldehyde dehydrogenase family. RocA subfamily.

The catalysed reaction is L-glutamate 5-semialdehyde + NAD(+) + H2O = L-glutamate + NADH + 2 H(+). It functions in the pathway amino-acid degradation; L-proline degradation into L-glutamate; L-glutamate from L-proline: step 2/2. The chain is 1-pyrroline-5-carboxylate dehydrogenase from Oceanobacillus iheyensis (strain DSM 14371 / CIP 107618 / JCM 11309 / KCTC 3954 / HTE831).